The following is a 512-amino-acid chain: 2-isopropylmalate synthase (512 aa).

A Pyruvate carboxyltransferase domain is found at 5–268 (LIIFDTTLRD…DIGIDTQQIL (264 aa)). Positions 14, 202, 204, and 239 each coordinate Mn(2+). Positions 394-512 (GFVSLSQHSE…SKADRVAAQG (119 aa)) are regulatory domain.

The protein belongs to the alpha-IPM synthase/homocitrate synthase family. LeuA type 1 subfamily. As to quaternary structure, homodimer. Requires Mn(2+) as cofactor.

The protein resides in the cytoplasm. The enzyme catalyses 3-methyl-2-oxobutanoate + acetyl-CoA + H2O = (2S)-2-isopropylmalate + CoA + H(+). Its pathway is amino-acid biosynthesis; L-leucine biosynthesis; L-leucine from 3-methyl-2-oxobutanoate: step 1/4. Its function is as follows. Catalyzes the condensation of the acetyl group of acetyl-CoA with 3-methyl-2-oxobutanoate (2-ketoisovalerate) to form 3-carboxy-3-hydroxy-4-methylpentanoate (2-isopropylmalate). This chain is 2-isopropylmalate synthase, found in Polaromonas naphthalenivorans (strain CJ2).